A 287-amino-acid chain; its full sequence is MTRDQKFALVTGCGKGGIGEALILEYTRRGIYAIATVLPTENSDHLTAAGITWFPLDVTDEQSVVDLKKSIASVTDGYLDFLVNNAGICYTMTAIDTDVSAVKRMFDVNVFGPMRMVHHFHDMLIQATGTIVNIGSIGGVVPYMYGASYNASKAALHHYSNTLRLEMSPFNVKVLTVISGEVGTNILKNDVHRNLPEGSYYSPLAVEFRDHVQRTPKTTSRFEYAENVVAQSLKSSPAAWFWTGSATGIIRFLDMFAWRTIWDFFFYREFNLGKVKDAYLANLKKDM.

Val10, Thr36, Asp57, Asn85, Tyr149, Lys153, Val182, and Thr184 together coordinate NADP(+). Tyr149 serves as the catalytic Proton acceptor. The active-site Lowers pKa of active site Tyr is the Lys153.

This sequence belongs to the short-chain dehydrogenases/reductases (SDR) family.

Its pathway is secondary metabolite biosynthesis. Its function is as follows. Short-chain dehydrogenase; part of the gene cluster that mediates the biosynthesis of virensols and trichoxide, fungal natural products that contain or are derived from a salicylaldehyde core. The pathway begins with the synthesis of the reduced chain in virensol C by the highly reducing polyketide synthase virA via condensation of one acetate and 8 malonate units. VirA has interesting programming rules since the first 2 ketides are fully reduced, the 3 following ketides undergo beta-dehydration, and the last 3 ketides are only reduced to beta-hydroxys to yield the trihydroxy portion. The production of aldehyde virensol C by virA alone is surprising, since virA does not contain a reductase (R) domain that is typically associated with reductive product release in HRPKS. The cupin-domain enzyme virC is involved in enhancing virA product turnover. The short-chain dehydrogenase virB then oxidizes the C-7 alcohol of virensol C to a ketone, yielding virensol D. Virensol D is further transformed to salicylaldehyde 5-deoxyaurocitrin by the short-chain dehydrogenase virD. VirD catalyzes the dehydrogenation of C-3 to form the beta-ketone aldehyde, which is followed by the generation of the nucleophilic C-2 that is required for the intramolecular aldol condensation between C-2 and C-7, itself followed by dehydration and aromatization which leads to salicylaldehyde 5-deoxyaurocitrin. While the dehydrogenation of virensol D is definitely catalyzed by virD, the aldol condensation and dehydration may be uncatalyzed or assisted by virD. The short chain dehydrogenase virG then converts salicylaldehyde 5-deoxyaurocitrin into virensol B which is further hydroxylated by the cytochrome P450 monooxygenase virE to yield the hydroquinone virensol A. VirI then may oxidize virensol A to form the quinone, while virH performs the epoxidation. Finally, the two remaining short-chain dehydrogenases, virK and virL, are probably responsible for reducing the ketones to the corresponding alcohols to furnish the epoxycyclohexanol structure in trichoxide. This is Short-chain dehydrogenase virD from Hypocrea virens (strain Gv29-8 / FGSC 10586) (Gliocladium virens).